A 222-amino-acid polypeptide reads, in one-letter code: UPF0585 protein CG18661 (222 aa).

This sequence belongs to the UPF0585 family.

The protein is UPF0585 protein CG18661 of Drosophila melanogaster (Fruit fly).